The following is a 262-amino-acid chain: Adenosylcobinamide-GDP ribazoletransferase (262 aa).

The next 6 membrane-spanning stretches (helical) occupy residues 43–63, 66–86, 120–140, 146–166, 191–211, and 242–262; these read YFGLVGLLVGLLSAIVFWLTQ, LPAGVSVLLAMLVGVLLTGGF, GALALILALLLKWQLLVELAL, AGSALIVAHTVSRVVSASIIF, LLILIASGVLVLLFLKGLAAL, and AAQQIAEIVCYFVLLVVGNIL.

Belongs to the CobS family. Mg(2+) serves as cofactor.

Its subcellular location is the cell inner membrane. It catalyses the reaction alpha-ribazole + adenosylcob(III)inamide-GDP = adenosylcob(III)alamin + GMP + H(+). The enzyme catalyses alpha-ribazole 5'-phosphate + adenosylcob(III)inamide-GDP = adenosylcob(III)alamin 5'-phosphate + GMP + H(+). It functions in the pathway cofactor biosynthesis; adenosylcobalamin biosynthesis; adenosylcobalamin from cob(II)yrinate a,c-diamide: step 7/7. Functionally, joins adenosylcobinamide-GDP and alpha-ribazole to generate adenosylcobalamin (Ado-cobalamin). Also synthesizes adenosylcobalamin 5'-phosphate from adenosylcobinamide-GDP and alpha-ribazole 5'-phosphate. The sequence is that of Adenosylcobinamide-GDP ribazoletransferase from Shewanella baltica (strain OS185).